Reading from the N-terminus, the 160-residue chain is Phosphopantetheine adenylyltransferase (160 aa).

Position 8 (Ser-8) interacts with substrate. ATP contacts are provided by residues 8–9 and His-16; that span reads SF. Residues Lys-40, Leu-73, and Lys-87 each coordinate substrate. Residues 88–90, Glu-98, and 122–128 contribute to the ATP site; these read GLR and YGYVSST.

Belongs to the bacterial CoaD family. As to quaternary structure, homohexamer. Requires Mg(2+) as cofactor.

The protein localises to the cytoplasm. The catalysed reaction is (R)-4'-phosphopantetheine + ATP + H(+) = 3'-dephospho-CoA + diphosphate. It participates in cofactor biosynthesis; coenzyme A biosynthesis; CoA from (R)-pantothenate: step 4/5. Functionally, reversibly transfers an adenylyl group from ATP to 4'-phosphopantetheine, yielding dephospho-CoA (dPCoA) and pyrophosphate. This chain is Phosphopantetheine adenylyltransferase, found in Corynebacterium glutamicum (strain R).